The following is a 728-amino-acid chain: Ophiobolin F synthase oblA (728 aa).

A (7Z)-ophiobola-7,19-dien-3-ol synthase region spans residues 1–322 (MEYKYSTIVD…RYHFPGRWNE (322 aa)). The Mg(2+) site is built by D93 and D97. D93 contributes to the substrate binding site. The DDXXD 1 signature appears at 93–97 (DDEID). Substrate-binding positions include 182–185 (RCMD), N226, 230–234 (SYEKE), and 313–314 (RY). The NSE/DTE motif lies at 226-234 (NDLFSYEKE). Positions 323-728 (LQKLRAEHGI…LRLMVDMLKV (406 aa)) are geranylfarnesyl diphosphate synthase. Residues 362–371 (GINGTNGVNG) show a composition bias toward low complexity. The interval 362–394 (GINGTNGVNGKRNRDEDGDENDARINGNGFKKP) is disordered. Residues K439, R442, and H471 each coordinate isopentenyl diphosphate. Residues D478 and D482 each coordinate Mg(2+). A DDXXD 2 motif is present at residues 478–482 (DDIED). R487 serves as a coordination point for dimethylallyl diphosphate. R488 lines the isopentenyl diphosphate pocket. Dimethylallyl diphosphate is bound by residues K565, T566, Q604, N611, K621, and K631.

In the N-terminal section; belongs to the terpene synthase family. The protein in the C-terminal section; belongs to the FPP/GGPP synthase family. The cofactor is Mg(2+).

The enzyme catalyses isopentenyl diphosphate + (2E,6E)-farnesyl diphosphate = (2E,6E,10E)-geranylgeranyl diphosphate + diphosphate. The catalysed reaction is isopentenyl diphosphate + (2E,6E,10E)-geranylgeranyl diphosphate = (2E,6E,10E,14E)-geranylfarnesyl diphosphate + diphosphate. It carries out the reaction (2E,6E,10E,14E)-geranylfarnesyl diphosphate + H2O = ophiobolin F + diphosphate. Its pathway is secondary metabolite biosynthesis; terpenoid biosynthesis. Bifunctional sesterterpene synthase; part of the gene cluster that mediates the biosynthesis of the sesterterpenes ophiobolins, fungal phytotoxins with potential anti-cancer activities. The first step of the pathway is performed by the sesterterpene synthase oblA that possesses both prenyl transferase and terpene cyclase activity, converting isopentenyl diphosphate and dimethylallyl diphosphate into geranylfarnesyl diphosphate (GFPP) and further converting GFPP into ophiobolin F, respectively. Other sesterterpenoids (C(25) terpenoids) are found as minor products of oblA. The cytochrome P450 monooxygenase oblB then catalyzes a four-step oxidative transformation of ophiobolin F to yield ophiobolin C. The function of the cytochrome P450 monooxygenase oblE has still to be determined. This Emericella variicolor (Aspergillus stellatus) protein is Ophiobolin F synthase oblA.